A 62-amino-acid chain; its full sequence is Weak neurotoxin 5 (62 aa).

5 disulfides stabilise this stretch: Cys3–Cys24, Cys6–Cys11, Cys17–Cys40, Cys44–Cys54, and Cys55–Cys60.

Belongs to the three-finger toxin family. Ancestral subfamily. Orphan group II sub-subfamily. Expressed by the venom gland.

The protein localises to the secreted. In terms of biological role, binds with low affinity to muscular (alpha-1-beta-1-delta-epsilon/CHRNA1-CHRNB1-CHRND-CHRNE) and very low affinity to neuronal (alpha-7/CHRNA7) nicotinic acetylcholine receptor (nAChR). The chain is Weak neurotoxin 5 from Naja naja (Indian cobra).